Reading from the N-terminus, the 366-residue chain is Chorismate synthase (366 aa).

Positions 48 and 54 each coordinate NADP(+). FMN contacts are provided by residues 125–127 (RSS), 242–243 (NA), glycine 287, 302–306 (KPTSS), and arginine 328.

The protein belongs to the chorismate synthase family. In terms of assembly, homotetramer. Requires FMNH2 as cofactor.

The enzyme catalyses 5-O-(1-carboxyvinyl)-3-phosphoshikimate = chorismate + phosphate. It functions in the pathway metabolic intermediate biosynthesis; chorismate biosynthesis; chorismate from D-erythrose 4-phosphate and phosphoenolpyruvate: step 7/7. Functionally, catalyzes the anti-1,4-elimination of the C-3 phosphate and the C-6 proR hydrogen from 5-enolpyruvylshikimate-3-phosphate (EPSP) to yield chorismate, which is the branch point compound that serves as the starting substrate for the three terminal pathways of aromatic amino acid biosynthesis. This reaction introduces a second double bond into the aromatic ring system. The protein is Chorismate synthase of Rhodospirillum rubrum (strain ATCC 11170 / ATH 1.1.1 / DSM 467 / LMG 4362 / NCIMB 8255 / S1).